Here is a 464-residue protein sequence, read N- to C-terminus: Phosphoglucosamine mutase (464 aa).

Ser112 functions as the Phosphoserine intermediate in the catalytic mechanism. Residues Ser112, Asp252, Asp254, and Asp256 each contribute to the Mg(2+) site. Ser112 bears the Phosphoserine mark.

The protein belongs to the phosphohexose mutase family. The cofactor is Mg(2+). Post-translationally, activated by phosphorylation.

It carries out the reaction alpha-D-glucosamine 1-phosphate = D-glucosamine 6-phosphate. In terms of biological role, catalyzes the conversion of glucosamine-6-phosphate to glucosamine-1-phosphate. This Synechococcus sp. (strain CC9902) protein is Phosphoglucosamine mutase.